A 309-amino-acid polypeptide reads, in one-letter code: tRNA pseudouridine synthase B (309 aa).

The active-site Nucleophile is the Asp-39.

It belongs to the pseudouridine synthase TruB family. Type 1 subfamily.

The enzyme catalyses uridine(55) in tRNA = pseudouridine(55) in tRNA. Responsible for synthesis of pseudouridine from uracil-55 in the psi GC loop of transfer RNAs. This is tRNA pseudouridine synthase B from Bacillus subtilis (strain 168).